We begin with the raw amino-acid sequence, 241 residues long: Zinc finger CCHC domain-containing protein 17 (241 aa).

An S1 motif domain is found at 16 to 88; sequence YTIFQGEVAM…DRIKVSLSMK (73 aa). A Phosphoserine modification is found at Ser114. The CCHC-type zinc finger occupies 131–148; the sequence is TTCKKCGCKGHFAKDCFM. N6-acetyllysine is present on Lys144. The tract at residues 160-241 is disordered; it reads EEEEEKEEAK…KKKHKKKHKE (82 aa). The span at 166 to 178 shows a compositional bias: basic and acidic residues; that stretch reads EEAKAEGLEKPDP. Residues 182–198 are compositionally biased toward basic residues; that stretch reads SSRKRKKEKKKKKHRDR. At Ser183 the chain carries Phosphoserine. The segment covering 211-225 has biased composition (basic and acidic residues); sequence DTGKKARHSSKDSKA. A compositionally biased stretch (basic residues) spans 226-241; sequence TKKKKKKKKHKKKHKE.

In terms of assembly, interacts with PNN. Associates with the 60S ribosomal subunit. In terms of tissue distribution, expressed in liver, brain, heart, kidney testis, stomach, small intestine, skin, thymus, uterus, placenta, spleen, lung and skeletal muscle.

The protein resides in the nucleus. Its subcellular location is the nucleolus. The chain is Zinc finger CCHC domain-containing protein 17 (Zcchc17) from Mus musculus (Mouse).